Reading from the N-terminus, the 396-residue chain is Multidrug efflux protein YfmO (396 aa).

12 helical membrane passes run 20-40, 56-76, 80-100, 114-134, 142-162, 171-191, 214-234, 249-269, 278-298, 301-321, 339-359, and 364-384; these read VWAV…VDPI, SLLF…SGAI, IGAK…AGLG, GGWG…IVGV, AIIL…LAGG, APFF…SFML, GLLT…ILLA, YVFF…APLV, SLVV…IWTD, TLII…NTIM, AYSS…GMLS, and ASTP…VLLM.

Belongs to the major facilitator superfamily.

It is found in the cell membrane. In terms of biological role, acts to efflux copper or a copper complex. It is possible that YfmO could contribute to copper resistance. The protein is Multidrug efflux protein YfmO (yfmO) of Bacillus subtilis (strain 168).